A 237-amino-acid chain; its full sequence is Large ribosomal subunit protein uL2 (237 aa).

Polar residues predominate over residues 1 to 11; the sequence is MGKRIISQNRG. Disordered stretches follow at residues 1 to 20 and 201 to 237; these read MGKRIISQNRGKGTPTYRAP and FGGGKHQHVGKPKTVSRNAPPGRKVGSIAARRTGVRR.

The protein belongs to the universal ribosomal protein uL2 family. Part of the 50S ribosomal subunit. Forms a bridge to the 30S subunit in the 70S ribosome.

Functionally, one of the primary rRNA binding proteins. Required for association of the 30S and 50S subunits to form the 70S ribosome, for tRNA binding and peptide bond formation. It has been suggested to have peptidyltransferase activity; this is somewhat controversial. Makes several contacts with the 16S rRNA in the 70S ribosome. This chain is Large ribosomal subunit protein uL2, found in Archaeoglobus fulgidus (strain ATCC 49558 / DSM 4304 / JCM 9628 / NBRC 100126 / VC-16).